Consider the following 564-residue polypeptide: Large neutral amino acids transporter small subunit 3 (564 aa).

Residues 20–40 (VVENLFFSAVLLGWASLLIML) form a helical membrane-spanning segment. N-linked (GlcNAc...) asparagine glycosylation is found at N54 and N57. 5 helical membrane-spanning segments follow: residues 78–98 (LGFTIGSFLLSATTLPLGILM), 105–124 (PLRLVGSACFAASCTLMALA), 131–151 (LSPLIFLALSLNGFAGICLTF), 165–185 (STFMALMIGSYASSAITFPGI), and 191–211 (AGVPFTVIMFTWSGLACLIFL). 2 positions are modified to phosphoserine: S262 and S267. 2 helical membrane passes run 303–323 (IFLWSLVTMGMTQLRVIFYMG) and 357–377 (SIFGVMQLLCLLTCPLIGYIM). An N-linked (GlcNAc...) asparagine glycan is attached at N396. S398 is modified (phosphoserine). The next 4 membrane-spanning stretches (helical) occupy residues 424-444 (AINAFTLTNILLVGFGIACLI), 451-471 (LLAFVLHTIVRGFFHSACGGL), 490-510 (LISAVFALLQQLLFMAMVGPL), and 515-535 (FWVNLGLLLLSFLGFLLPSYL). Residue N558 is glycosylated (N-linked (GlcNAc...) asparagine).

The protein belongs to the SLC43A transporter (TC 2.A.1.44) family. In terms of tissue distribution, expressed in the kidney cortex as well as liver, pancreas, and skeletal muscle. In kidney expressed in the glomerular tuft (at protein level). Expressed in liver, skeletal muscle and pancreas (at protein level).

The protein resides in the cell membrane. The protein localises to the apical cell membrane. It localises to the endoplasmic reticulum membrane. It carries out the reaction D-leucine(in) = D-leucine(out). It catalyses the reaction L-leucine(in) = L-leucine(out). The catalysed reaction is L-isoleucine(in) = L-isoleucine(out). The enzyme catalyses L-methionine(in) = L-methionine(out). It carries out the reaction L-phenylalanine(in) = L-phenylalanine(out). It catalyses the reaction L-valine(in) = L-valine(out). Uniport that mediates the transport of neutral amino acids such as L-leucine, L-isoleucine, L-valine, and L-phenylalanine. The transport activity is sodium ions-independent, electroneutral and mediated by a facilitated diffusion. The chain is Large neutral amino acids transporter small subunit 3 from Mus musculus (Mouse).